A 338-amino-acid chain; its full sequence is Heat-inducible transcription repressor HrcA (338 aa).

This sequence belongs to the HrcA family.

Functionally, negative regulator of class I heat shock genes (grpE-dnaK-dnaJ and groELS operons). Prevents heat-shock induction of these operons. In Bacillus cereus (strain AH187), this protein is Heat-inducible transcription repressor HrcA.